The following is a 407-amino-acid chain: Phosphonoacetate hydrolase (407 aa).

Zn(2+)-binding residues include Asp-25, Thr-64, Asp-202, His-206, Asp-241, His-242, and His-368. Residues Thr-64 and Asp-202 each coordinate substrate. Substrate contacts are provided by His-242 and His-368.

This sequence belongs to the alkaline phosphatase family. PhnA subfamily. In terms of assembly, homodimer. Zn(2+) serves as cofactor.

It catalyses the reaction phosphonoacetate + H2O = acetate + phosphate + H(+). With respect to regulation, completely inhibited by EDTA and 1,10-phenanthroline. Moderately inhibited by the phosphonocarboxylic acids phosphonoformate and 3-phosphonopropionate and the phosphonate herbicide glyphosate. Partially inhibited by the reducing agents sodium sulfide and dithiotheitol and the chelating agent iminodiacetate. Nonphosphonate analogs of phosphonoacetate, such as arsonoacetate, sulfonoacetate and malonate are poor inhibitors. Inorganic phosphate, acetate and the known phosphonotase inhibitor phosphite have little effect on activity. Not inhibited by the alkylphosphonic acids methylphosphonate and ethylphosphonate, or the aminoalkylphosphonates 2-aminoethylphosphonate, 3-aminopropylphosphonate and 4-aminobutylphosphonate. Fe(3+), Ca(2+), Mg(2+) and Cs(+) have no effect on activity. Activity is slightly increased by the aminoalkylphosphonates 1-aminoethylphosphonate, 1-aminobutylphosphonate, 2-amino-4-butylphosphonate. Activity is increased by Zn(2+), Mn(2+) and Co(2+), these 3 metal ions also allow recovery of activity after EDTA treatment. In terms of biological role, specifically hydrolyzes phosphonoacetate. Does not have activity on other organophosphonates or acetates. The polypeptide is Phosphonoacetate hydrolase (Pseudomonas fluorescens).